The chain runs to 195 residues: Holliday junction branch migration complex subunit RuvA (195 aa).

The tract at residues 1–61 (MYEYLDGVVV…ENDQTLYGFK (61 aa)) is domain I. The tract at residues 62-139 (KAEDKELFLN…AVENEVGTLF (78 aa)) is domain II. The segment at 139–143 (FDLST) is flexible linker. The segment at 144–195 (TSNQALDEALEALIALGYSEKEVKKLTKKLSEQTDRTTDQYISSGLKLLMKG) is domain III.

The protein belongs to the RuvA family. As to quaternary structure, homotetramer. Forms an RuvA(8)-RuvB(12)-Holliday junction (HJ) complex. HJ DNA is sandwiched between 2 RuvA tetramers; dsDNA enters through RuvA and exits via RuvB. An RuvB hexamer assembles on each DNA strand where it exits the tetramer. Each RuvB hexamer is contacted by two RuvA subunits (via domain III) on 2 adjacent RuvB subunits; this complex drives branch migration. In the full resolvosome a probable DNA-RuvA(4)-RuvB(12)-RuvC(2) complex forms which resolves the HJ.

It localises to the cytoplasm. In terms of biological role, the RuvA-RuvB-RuvC complex processes Holliday junction (HJ) DNA during genetic recombination and DNA repair, while the RuvA-RuvB complex plays an important role in the rescue of blocked DNA replication forks via replication fork reversal (RFR). RuvA specifically binds to HJ cruciform DNA, conferring on it an open structure. The RuvB hexamer acts as an ATP-dependent pump, pulling dsDNA into and through the RuvAB complex. HJ branch migration allows RuvC to scan DNA until it finds its consensus sequence, where it cleaves and resolves the cruciform DNA. The polypeptide is Holliday junction branch migration complex subunit RuvA (Pediococcus pentosaceus (strain ATCC 25745 / CCUG 21536 / LMG 10740 / 183-1w)).